A 704-amino-acid polypeptide reads, in one-letter code: Elongation factor G (704 aa).

One can recognise a tr-type G domain in the interval 8 to 290; sequence ARYRNIGISA…AVIDYLPSPV (283 aa). GTP is bound by residues 17 to 24, 88 to 92, and 142 to 145; these read AHIDAGKT, DTPGH, and NKMD. N6-acetyllysine is present on residues lysine 504 and lysine 643.

It belongs to the TRAFAC class translation factor GTPase superfamily. Classic translation factor GTPase family. EF-G/EF-2 subfamily.

It localises to the cytoplasm. Functionally, catalyzes the GTP-dependent ribosomal translocation step during translation elongation. During this step, the ribosome changes from the pre-translocational (PRE) to the post-translocational (POST) state as the newly formed A-site-bound peptidyl-tRNA and P-site-bound deacylated tRNA move to the P and E sites, respectively. Catalyzes the coordinated movement of the two tRNA molecules, the mRNA and conformational changes in the ribosome. The protein is Elongation factor G of Shigella sonnei (strain Ss046).